The chain runs to 618 residues: Prothrombin (618 aa).

Residues 1–24 form the signal peptide; the sequence is MSHVRGLGLPGCLALAALVSLVHS. The propeptide occupies 25-43; that stretch reads QHVFLAPQQALSLLQRVRR. Positions 44–90 constitute a Gla domain; sequence ANSGFLEELRKGNLERECVEEQCSYEEAFEALESPQDTDVFWAKYTV. A 4-carboxyglutamate mark is found at Glu-50, Glu-51, Glu-58, Glu-60, Glu-63, Glu-64, Glu-69, Glu-70, Glu-73, and Glu-76. The cysteines at positions 61 and 66 are disulfide-linked. 10 cysteine pairs are disulfide-bonded: Cys-91-Cys-104, Cys-109-Cys-187, Cys-130-Cys-170, Cys-158-Cys-182, Cys-215-Cys-293, Cys-236-Cys-276, Cys-264-Cys-288, Cys-333-Cys-479, Cys-388-Cys-404, and Cys-533-Cys-547. Kringle domains lie at 109 to 187 and 215 to 292; these read CAMD…VPVC and CLTE…NLNY. N-linked (GlcNAc...) asparagine glycans are attached at residues Asn-122 and Asn-144. The 255-residue stretch at 361–615 folds into the Peptidase S1 domain; that stretch reads IVEGWDAEKG…LKRWIQKVID (255 aa). His-403 (charge relay system) is an active-site residue. Asn-413 carries N-linked (GlcNAc...) asparagine glycosylation. Asp-459 serves as the catalytic Charge relay system. Residues 548-570 form a high affinity receptor-binding region which is also known as the TP508 peptide region; it reads AGFKVNDTKRGDACEGDSGGPFV. A glycan (N-linked (GlcNAc...) asparagine) is linked at Asn-553. Cys-561 and Cys-591 are disulfide-bonded. The active-site Charge relay system is Ser-565.

The protein belongs to the peptidase S1 family. As to quaternary structure, heterodimer (named alpha-thrombin) of a light and a heavy chain; disulfide-linked. Forms a heterodimer with SERPINA5. In plasma, interacts (via N-terminus) with alpha-1-microglobulin; this interaction does not prevent the activation of prothrombin to thrombin. The gamma-carboxyglutamyl residues, which bind calcium ions, result from the carboxylation of glutamyl residues by a microsomal enzyme, the vitamin K-dependent carboxylase. The modified residues are necessary for the calcium-dependent interaction with a negatively charged phospholipid surface, which is essential for the conversion of prothrombin to thrombin. Post-translationally, in the penultimate step of the coagulation cascade, prothrombin is converted to thrombin by the prothrombinase complex composed of factor Xa (F10), cofactor Va (F5), and phospholipids. This activation requires factor Xa-catalyzed sequential cleavage at 2 sites, Arg-311 and Arg-360, along 2 possible pathways. In the first pathway, the first cleavage occurs at Arg-311, leading to the formation of the inactive intermediate prethrombin-2. This pathway preferentially occurs on platelets and in the absence of cofactor Va. In the second pathway, the first cleavage occurs at Arg-360, which separates protease domain into 2 chains that remain connected through a disulfide bond and generates the active intermediate meizothrombin. The presence of cofactor Va directs activation along the meizothrombin pathway and greatly accelerates the rate of cleavage at Arg-360, but has a smaller effect on the cleavage of meizothrombin at Arg-311. Meizothrombin accumulates as an intermediate when prothrombinase is assembled on the membrane of red blood cells.

It catalyses the reaction Selective cleavage of Arg-|-Gly bonds in fibrinogen to form fibrin and release fibrinopeptides A and B.. With respect to regulation, activity is promoted in the presence of negatively charged surfaces, such as polyphosphate and dextran sulfate. Inhibited by SERPINA5. Functionally, thrombin, which cleaves bonds after Arg and Lys, converts fibrinogen to fibrin and activates factors V, VII, VIII, XIII, and, in complex with thrombomodulin, protein C. Functions in blood homeostasis, inflammation and wound healing. Activates coagulation factor XI (F11); activation is promoted by the contact with negatively charged surfaces. Triggers the production of pro-inflammatory cytokines, such as MCP-1/CCL2 and IL8/CXCL8, in endothelial cells. The sequence is that of Prothrombin (F2) from Mus musculus (Mouse).